The primary structure comprises 318 residues: DNA-directed RNA polymerase subunit alpha (318 aa).

Positions 1–232 (MAHQRIVGPT…NLFSPLQNVR (232 aa)) are alpha N-terminal domain (alpha-NTD). The segment at 246–318 (KMTEVLVEEL…HLPKEKFTKD (73 aa)) is alpha C-terminal domain (alpha-CTD).

It belongs to the RNA polymerase alpha chain family. In terms of assembly, in plastids the minimal PEP RNA polymerase catalytic core is composed of four subunits: alpha, beta, beta', and beta''. When a (nuclear-encoded) sigma factor is associated with the core the holoenzyme is formed, which can initiate transcription.

The protein resides in the plastid. The protein localises to the chloroplast. The catalysed reaction is RNA(n) + a ribonucleoside 5'-triphosphate = RNA(n+1) + diphosphate. Functionally, DNA-dependent RNA polymerase catalyzes the transcription of DNA into RNA using the four ribonucleoside triphosphates as substrates. In Chlorokybus atmophyticus (Soil alga), this protein is DNA-directed RNA polymerase subunit alpha.